Reading from the N-terminus, the 1616-residue chain is Myosin-IIIa (1616 aa).

The Protein kinase domain maps to 21–287 (WEITETIGKG…VSELLQHKFI (267 aa)). ATP is bound by residues 27–35 (IGKGTYGKV) and K50. D150 (proton acceptor) is an active-site residue. A Myosin motor domain is found at 338-1053 (KDVDDLATLE…HVEQLNLMRK (716 aa)). Positions 934-956 (LMDLLSKMVVGQPHFVRCIKPNS) are actin-binding. IQ domains are found at residues 1055–1084 (AIDK…KRKE), 1082–1111 (RKES…MKNT), and 1346–1375 (EDKA…SSFK). The interval 1401–1479 (EEINNIKKKD…RRVSSQQCLS (79 aa)) is interaction with MORN4. 2 disordered regions span residues 1545 to 1567 (LPSR…QQEL) and 1581 to 1616 (AESP…VQQS). 2 stretches are compositionally biased toward basic and acidic residues: residues 1550–1564 (GPKE…RRPQ) and 1583–1592 (SPEKEEEREP). Residues 1602-1616 (LLRKTSQRRRLVQQS) are compositionally biased toward basic residues.

This sequence in the C-terminal section; belongs to the TRAFAC class myosin-kinesin ATPase superfamily. Myosin family. In the N-terminal section; belongs to the protein kinase superfamily. STE Ser/Thr protein kinase family. Interacts with MORN4. Interacts (via C-terminus) with ESPN and ESPNL. In terms of tissue distribution, strongest expression in retina, retinal pigment epithelial cells, cochlea and pancreas.

The protein localises to the cytoplasm. The protein resides in the cytoskeleton. Its subcellular location is the cell projection. It is found in the filopodium tip. It localises to the stereocilium. It carries out the reaction L-seryl-[protein] + ATP = O-phospho-L-seryl-[protein] + ADP + H(+). The catalysed reaction is L-threonyl-[protein] + ATP = O-phospho-L-threonyl-[protein] + ADP + H(+). It catalyses the reaction ATP + H2O = ADP + phosphate + H(+). In terms of biological role, actin-dependent motor protein with a protein kinase activity, playing an essential role in hearing. Probably also plays a role in vision. Required for normal cochlear hair bundle development and hearing. Plays an important role in the early steps of cochlear hair bundle morphogenesis. Influences the number and lengths of stereocilia to be produced and limits the growth of microvilli within the forming auditory hair bundles thereby contributing to the architecture of the hair bundle, including its staircase pattern. Involved in the elongation of actin in stereocilia tips by transporting the actin regulatory factor ESPN to the plus ends of actin filaments. The polypeptide is Myosin-IIIa (MYO3A) (Homo sapiens (Human)).